Consider the following 246-residue polypeptide: 7-cyano-7-deazaguanine synthase (246 aa).

24–34 (FSGGLDSTTVL) contributes to the ATP binding site. Positions 209, 219, 222, and 225 each coordinate Zn(2+).

The protein belongs to the QueC family. It depends on Zn(2+) as a cofactor.

It catalyses the reaction 7-carboxy-7-deazaguanine + NH4(+) + ATP = 7-cyano-7-deazaguanine + ADP + phosphate + H2O + H(+). It participates in purine metabolism; 7-cyano-7-deazaguanine biosynthesis. In terms of biological role, catalyzes the ATP-dependent conversion of 7-carboxy-7-deazaguanine (CDG) to 7-cyano-7-deazaguanine (preQ(0)). The chain is 7-cyano-7-deazaguanine synthase from Polynucleobacter asymbioticus (strain DSM 18221 / CIP 109841 / QLW-P1DMWA-1) (Polynucleobacter necessarius subsp. asymbioticus).